A 774-amino-acid polypeptide reads, in one-letter code: 1,4-alpha-glucan branching enzyme GlgB 1 (774 aa).

The tract at residues 1 to 66 (MTPRPSSSGP…AEVAVSPAPD (66 aa)) is disordered. Over residues 29-40 (KPAKAAKKKAPR) the composition is skewed to basic residues. Low complexity predominate over residues 41 to 55 (RTTASANASATTSVS). The active-site Nucleophile is Asp457. The active-site Proton donor is Glu510. The tract at residues 748 to 774 (YGGGDVVNPDPVKPEPQGGTAARRASG) is disordered.

The protein belongs to the glycosyl hydrolase 13 family. GlgB subfamily. As to quaternary structure, monomer.

The catalysed reaction is Transfers a segment of a (1-&gt;4)-alpha-D-glucan chain to a primary hydroxy group in a similar glucan chain.. The protein operates within glycan biosynthesis; glycogen biosynthesis. Functionally, catalyzes the formation of the alpha-1,6-glucosidic linkages in glycogen by scission of a 1,4-alpha-linked oligosaccharide from growing alpha-1,4-glucan chains and the subsequent attachment of the oligosaccharide to the alpha-1,6 position. This Streptomyces coelicolor (strain ATCC BAA-471 / A3(2) / M145) protein is 1,4-alpha-glucan branching enzyme GlgB 1 (glgB1).